Consider the following 227-residue polypeptide: Cytidylate kinase (227 aa).

An ATP-binding site is contributed by 12 to 20 (GPSGAGKGT).

Belongs to the cytidylate kinase family. Type 1 subfamily.

It localises to the cytoplasm. It carries out the reaction CMP + ATP = CDP + ADP. The enzyme catalyses dCMP + ATP = dCDP + ADP. This is Cytidylate kinase from Xanthomonas euvesicatoria pv. vesicatoria (strain 85-10) (Xanthomonas campestris pv. vesicatoria).